The chain runs to 376 residues: Alpha-2,8-sialyltransferase 8E (376 aa).

The helical transmembrane segment at 17–37 threads the bilayer; that stretch reads TLLFIFICAFALVTLLQQILY. The N-linked (GlcNAc...) asparagine glycan is linked to N56. 2 disulfide bridges follow: C164-C313 and C178-C373. Substrate is bound by residues N192 and 214–216; that span reads NPS. An N-linked (GlcNAc...) asparagine glycan is attached at N241. A substrate-binding site is contributed by 300-302; that stretch reads STG. H348 functions as the Proton donor/acceptor in the catalytic mechanism.

It belongs to the glycosyltransferase 29 family. Expressed in liver.

The protein resides in the golgi apparatus membrane. The enzyme catalyses a ganglioside GT1b (d18:1(4E)) + CMP-N-acetyl-beta-neuraminate = a ganglioside GQ1b (d18:1(4E)) + CMP + H(+). The catalysed reaction is a ganglioside GQ1c (d18:1(4E)) + CMP-N-acetyl-beta-neuraminate = a ganglioside GP1c (d18:1(4E)) + CMP + H(+). It carries out the reaction a ganglioside GD3 (d18:1(4E)) + CMP-N-acetyl-beta-neuraminate = a ganglioside GT3 (d18:1(4E)) + CMP + H(+). It catalyses the reaction a ganglioside GD1a (d18:1(4E)) + CMP-N-acetyl-beta-neuraminate = a ganglioside GT1a (d18:1(4E)) + CMP + H(+). The enzyme catalyses a ganglioside GM1b (d18:1(4E)) + CMP-N-acetyl-beta-neuraminate = a ganglioside GD1c (d18:1(4E)) + CMP + H(+). It functions in the pathway protein modification; protein glycosylation. In terms of biological role, involved in the synthesis of gangliosides GD1c, GT1a, GQ1b, GP1c and GT3 from GD1a, GT1b, GM1b and GD3 respectively. The polypeptide is Alpha-2,8-sialyltransferase 8E (Rattus norvegicus (Rat)).